We begin with the raw amino-acid sequence, 217 residues long: tRNA (guanine-N(7)-)-methyltransferase (217 aa).

Glutamate 48, glutamate 73, asparagine 100, and aspartate 123 together coordinate S-adenosyl-L-methionine. Aspartate 123 is an active-site residue. Lysine 127 and aspartate 159 together coordinate substrate.

Belongs to the class I-like SAM-binding methyltransferase superfamily. TrmB family.

It carries out the reaction guanosine(46) in tRNA + S-adenosyl-L-methionine = N(7)-methylguanosine(46) in tRNA + S-adenosyl-L-homocysteine. Its pathway is tRNA modification; N(7)-methylguanine-tRNA biosynthesis. In terms of biological role, catalyzes the formation of N(7)-methylguanine at position 46 (m7G46) in tRNA. The chain is tRNA (guanine-N(7)-)-methyltransferase from Leptospira interrogans serogroup Icterohaemorrhagiae serovar copenhageni (strain Fiocruz L1-130).